The chain runs to 95 residues: Co-chaperonin GroES (95 aa).

This sequence belongs to the GroES chaperonin family. As to quaternary structure, heptamer of 7 subunits arranged in a ring. Interacts with the chaperonin GroEL.

Its subcellular location is the cytoplasm. Together with the chaperonin GroEL, plays an essential role in assisting protein folding. The GroEL-GroES system forms a nano-cage that allows encapsulation of the non-native substrate proteins and provides a physical environment optimized to promote and accelerate protein folding. GroES binds to the apical surface of the GroEL ring, thereby capping the opening of the GroEL channel. The protein is Co-chaperonin GroES of Ruegeria pomeroyi (strain ATCC 700808 / DSM 15171 / DSS-3) (Silicibacter pomeroyi).